The sequence spans 242 residues: tRNA pseudouridine synthase A (242 aa).

Catalysis depends on Asp-51, which acts as the Nucleophile. Position 107 (Tyr-107) interacts with substrate.

This sequence belongs to the tRNA pseudouridine synthase TruA family. In terms of assembly, homodimer.

It catalyses the reaction uridine(38/39/40) in tRNA = pseudouridine(38/39/40) in tRNA. In terms of biological role, formation of pseudouridine at positions 38, 39 and 40 in the anticodon stem and loop of transfer RNAs. This Helicobacter pylori (strain HPAG1) protein is tRNA pseudouridine synthase A.